The chain runs to 877 residues: Alanine--tRNA ligase (877 aa).

Residues histidine 563, histidine 567, cysteine 665, and histidine 669 each contribute to the Zn(2+) site.

It belongs to the class-II aminoacyl-tRNA synthetase family. Zn(2+) is required as a cofactor.

It is found in the cytoplasm. The catalysed reaction is tRNA(Ala) + L-alanine + ATP = L-alanyl-tRNA(Ala) + AMP + diphosphate. Functionally, catalyzes the attachment of alanine to tRNA(Ala) in a two-step reaction: alanine is first activated by ATP to form Ala-AMP and then transferred to the acceptor end of tRNA(Ala). Also edits incorrectly charged Ser-tRNA(Ala) and Gly-tRNA(Ala) via its editing domain. In Thermoanaerobacter pseudethanolicus (strain ATCC 33223 / 39E) (Clostridium thermohydrosulfuricum), this protein is Alanine--tRNA ligase.